A 147-amino-acid chain; its full sequence is Large ribosomal subunit protein uL15 (147 aa).

The interval 1-54 (MRLSDIKPTPGSMKKRTRVGRGIGSGKGKTSGKGHKGQKARGRGKVHPWFEGGQ) is disordered. A compositionally biased stretch (basic residues) spans 30 to 46 (TSGKGHKGQKARGRGKV).

The protein belongs to the universal ribosomal protein uL15 family. As to quaternary structure, part of the 50S ribosomal subunit.

In terms of biological role, binds to the 23S rRNA. The sequence is that of Large ribosomal subunit protein uL15 from Thermosipho melanesiensis (strain DSM 12029 / CIP 104789 / BI429).